The sequence spans 154 residues: Ribonuclease H (154 aa).

Residues 1-142 (MQKQIEIFTD…CDELAKKGAE (142 aa)) form the RNase H type-1 domain. The Mg(2+) site is built by D10, E48, D70, and D134.

Belongs to the RNase H family. Monomer. Mg(2+) serves as cofactor.

The protein localises to the cytoplasm. It carries out the reaction Endonucleolytic cleavage to 5'-phosphomonoester.. In terms of biological role, endonuclease that specifically degrades the RNA of RNA-DNA hybrids. This chain is Ribonuclease H, found in Haemophilus influenzae (strain 86-028NP).